A 127-amino-acid chain; its full sequence is Snaclec macrovipecetin subunit beta (127 aa).

Intrachain disulfides connect C4–C15, C32–C121, and C98–C113. In terms of domain architecture, C-type lectin spans 11-122 (YEGHCYKVFD…CSRTYKFVCK (112 aa)).

As to quaternary structure, heterodimer of subunits alpha and beta; disulfide-linked. As to expression, expressed by the venom gland.

The protein localises to the secreted. Its function is as follows. Interferes with one step of hemostasis (modulation of platelet aggregation, or coagulation cascade, for example). This chain is Snaclec macrovipecetin subunit beta, found in Macrovipera lebetinus (Levantine viper).